Consider the following 210-residue polypeptide: Glutathione S-transferase P (210 aa).

The GST N-terminal domain occupies 2–81 (PPYTVVYFPV…HLGRTLGLYG (80 aa)). At Tyr4 the chain carries Phosphotyrosine; by EGFR. Residues Tyr8, Arg14, Trp39, Lys45, and 52 to 53 (QL) each bind glutathione. Thr62 carries the post-translational modification Phosphothreonine. 65 to 66 (QS) contributes to the glutathione binding site. In terms of domain architecture, GST C-terminal spans 83 to 204 (DQREAALVDM…ASPEHVNLPI (122 aa)). 2 positions are modified to N6-succinyllysine: Lys103 and Lys116. Lys128 carries the post-translational modification N6-acetyllysine.

The protein belongs to the GST superfamily. Pi family. Homodimer. Interacts with CDK5.

It is found in the cytoplasm. The protein resides in the mitochondrion. Its subcellular location is the nucleus. It carries out the reaction RX + glutathione = an S-substituted glutathione + a halide anion + H(+). It catalyses the reaction prostaglandin J2 + glutathione = prostaglandin J2-S-(R)-glutathione. The enzyme catalyses prostaglandin J2 + glutathione = prostaglandin J2-S-(S)-glutathione. The catalysed reaction is prostaglandin A2 + glutathione = prostaglandin A2-S-(S)-glutathione. It carries out the reaction 11(S)-hydroxy-14(S),15(S)-epoxy-(5Z,8Z,12E)-eicosatrienoate + glutathione = (11S,15S)-dihydroxy-14(R)-S-glutathionyl-(5Z,8Z,12E)-eicosatrienoate. Conjugation of reduced glutathione to a wide number of exogenous and endogenous hydrophobic electrophiles. Involved in the formation of glutathione conjugates of both prostaglandin A2 (PGA2) and prostaglandin J2 (PGJ2). Participates in the formation of novel hepoxilin regioisomers. Negatively regulates CDK5 activity via p25/p35 translocation to prevent neurodegeneration. In Macaca mulatta (Rhesus macaque), this protein is Glutathione S-transferase P (GSTP1).